A 419-amino-acid chain; its full sequence is Probable pectate lyase C (419 aa).

The N-terminal stretch at 1 to 19 is a signal peptide; the sequence is MRLTPSLISCLSLLHFTSA. N48, N164, and N201 each carry an N-linked (GlcNAc...) asparagine glycan. The active site involves R204. An EF-hand domain is found at 261–296; sequence NENFHAYVETNYYDSDKDGTLNGSELGVDSTNYGGM. Residues D274, D276, D278, and T280 each coordinate Ca(2+). N282 carries an N-linked (GlcNAc...) asparagine glycan. Position 285 (E285) interacts with Ca(2+). The disordered stretch occupies residues 352-395; the sequence is ISDEADMGGAGDLDQGTTPTDTDGDGIPDDAEAELGTDPNTADS. Over residues 363–372 the composition is skewed to low complexity; the sequence is DLDQGTTPTD. Over residues 373–386 the composition is skewed to acidic residues; it reads TDGDGIPDDAEAEL.

This sequence belongs to the polysaccharide lyase 1 family. Ca(2+) serves as cofactor.

Its subcellular location is the secreted. It catalyses the reaction Eliminative cleavage of (1-&gt;4)-alpha-D-galacturonan to give oligosaccharides with 4-deoxy-alpha-D-galact-4-enuronosyl groups at their non-reducing ends.. In terms of biological role, pectinolytic enzyme consist of four classes of enzymes: pectin lyase, polygalacturonase, pectin methylesterase and rhamnogalacturonase. Among pectinolytic enzymes, pectin lyase is the most important in depolymerization of pectin, since it cleaves internal glycosidic bonds of highly methylated pectins. Favors pectate, the anion, over pectin, the methyl ester. This Aspergillus oryzae (strain ATCC 42149 / RIB 40) (Yellow koji mold) protein is Probable pectate lyase C (plyC).